A 347-amino-acid chain; its full sequence is D-fructose 1,6-bisphosphatase class 2/sedoheptulose 1,7-bisphosphatase (347 aa).

Positions 33, 57, 97, and 100 each coordinate Mn(2+). Residues 100-102, Tyr131, 176-178, and 198-200 each bind substrate; these read EGT, RKR, and DGD. Residue Glu225 participates in Mn(2+) binding.

It belongs to the FBPase class 2 family. In terms of assembly, homotetramer. It depends on Mn(2+) as a cofactor.

The enzyme catalyses beta-D-fructose 1,6-bisphosphate + H2O = beta-D-fructose 6-phosphate + phosphate. The catalysed reaction is D-sedoheptulose 1,7-bisphosphate + H2O = D-sedoheptulose 7-phosphate + phosphate. The protein operates within carbohydrate biosynthesis; Calvin cycle. Functionally, catalyzes the hydrolysis of fructose 1,6-bisphosphate (Fru 1,6-P2) and sedoheptulose 1,7-bisphosphate (Sed 1,7-P2) to fructose 6-phosphate and sedoheptulose 7-phosphate, respectively. The polypeptide is D-fructose 1,6-bisphosphatase class 2/sedoheptulose 1,7-bisphosphatase (Synechococcus sp. (strain JA-3-3Ab) (Cyanobacteria bacterium Yellowstone A-Prime)).